The following is a 117-amino-acid chain: G antigen 12J (117 aa).

The disordered stretch occupies residues 1 to 117; the sequence is MSWRGRSTYY…PEEGEKQSQC (117 aa). 2 stretches are compositionally biased toward acidic residues: residues 32–45 and 87–96; these read FSDEVEPATPEEGE and ECEDGPDGQE. A compositionally biased stretch (basic and acidic residues) spans 103–117; the sequence is EEVKTPEEGEKQSQC.

It belongs to the GAGE family.

This chain is G antigen 12J (GAGE12J), found in Homo sapiens (Human).